The sequence spans 74 residues: MTSFGYRGKRVSPIPPKDKIDYKEVDLLRKFITERGKILPRRITGLTAKQQRDLTVAIKRARLLALLPFVNQEG.

Belongs to the bacterial ribosomal protein bS18 family. Part of the 30S ribosomal subunit. Forms a tight heterodimer with protein bS6.

Its function is as follows. Binds as a heterodimer with protein bS6 to the central domain of the 16S rRNA, where it helps stabilize the platform of the 30S subunit. This Gloeobacter violaceus (strain ATCC 29082 / PCC 7421) protein is Small ribosomal subunit protein bS18.